Consider the following 391-residue polypeptide: Outer membrane protein 41 (391 aa).

The signal sequence occupies residues 1–20 (MKVKYLMLTLVGAIALNASA). Q21 carries the post-translational modification Pyrrolidone carboxylic acid. The region spanning 282–391 (TKTENILTEK…WNRVVIVRSK (110 aa)) is the OmpA-like domain.

It belongs to the outer membrane OOP (TC 1.B.6) superfamily. Disulfide-linked heterodimer with Omp40.

Its subcellular location is the cell outer membrane. Its function is as follows. May have porin activity and function in peptidoglycan binding. This Porphyromonas gingivalis (strain ATCC BAA-308 / W83) protein is Outer membrane protein 41.